Here is a 543-residue protein sequence, read N- to C-terminus: Ipecac alkaloid beta-glucosidase 2 (543 aa).

A beta-D-glucoside contacts are provided by residues Q36, H140, N185–E186, Y350, E422, W471, and F487. E186 functions as the Proton donor in the catalytic mechanism. E422 serves as the catalytic Nucleophile.

Belongs to the glycosyl hydrolase 1 family.

The protein localises to the cytoplasm. Its subcellular location is the cytosol. The enzyme catalyses deacetylipecoside + H2O = deacetylipecoside aglycone + D-glucose. The catalysed reaction is deacetylisoipecoside + H2O = deacetylisoipecoside aglycone + D-glucose. Its pathway is alkaloid biosynthesis. Functionally, beta-glucosidase catalyzing deglucosylation on N-deacetylisoipecoside and N-deacetylipecoside. The polypeptide is Ipecac alkaloid beta-glucosidase 2 (Carapichea ipecacuanha (Ipecac)).